A 178-amino-acid polypeptide reads, in one-letter code: Endothelin-2 (178 aa).

The first 24 residues, 1–24 (MVSVPTTWCSVALALLVALHEGKG), serve as a signal peptide directing secretion. The propeptide occupies 25–46 (QAAATLEQPASSSHAQGTHLRL). 2 disulfides stabilise this stretch: C49–C63 and C51–C59. Positions 70–178 (VNTPEQTAPY…RSTHSRWRKR (109 aa)) are excised as a propeptide. Residues 96-111 (CQCSSARDPACATFCL) are endothelin-like. The disordered stretch occupies residues 159 to 178 (KRQQEAMREPRSTHSRWRKR). Residues 160–170 (RQQEAMREPRS) show a composition bias toward basic and acidic residues.

Belongs to the endothelin/sarafotoxin family. Expressed in lung, but not in placental stem villi vessels or cultured placental villi smooth muscle cells.

The protein resides in the secreted. Functionally, endothelins are endothelium-derived vasoconstrictor peptides. This chain is Endothelin-2 (EDN2), found in Homo sapiens (Human).